The chain runs to 271 residues: Phosphatidylinositol transfer protein alpha isoform (271 aa).

T59, K61, E86, N90, T97, and K195 together coordinate a 1,2-diacyl-sn-glycero-3-phospho-(1D-myo-inositol). K216 is modified (N6-acetyllysine). Residues 251–264 (TKRQLDEMRQKDPV) are compositionally biased toward basic and acidic residues. Residues 251-271 (TKRQLDEMRQKDPVKGMTADD) form a disordered region.

It belongs to the PtdIns transfer protein family. PI transfer class I subfamily. Phosphorylated by PKC in a calcium and phosphatidylserine-dependent manner. As to expression, expressed in a wide range of tissues.

The protein resides in the cytoplasm. The protein localises to the nucleus. The catalysed reaction is a 1,2-diacyl-sn-glycero-3-phosphocholine(in) = a 1,2-diacyl-sn-glycero-3-phosphocholine(out). It catalyses the reaction a 1,2-diacyl-sn-glycero-3-phospho-(1D-myo-inositol)(in) = a 1,2-diacyl-sn-glycero-3-phospho-(1D-myo-inositol)(out). With respect to regulation, phosphatidylinositol transfer activity is inhibited by N-ethylmaleimide. Its function is as follows. Catalyzes the transfer of phosphatidylinositol (PI) and phosphatidylcholine (PC) between membranes. Shows a preference for PI and PC containing shorter saturated or monosaturated acyl chains at the sn-1 and sn-2 positions. Preference order for PC is C16:1 &gt; C16:0 &gt; C18:1 &gt; C18:0 &gt; C20:4 and for PI is C16:1 &gt; C16:0 &gt; C18:1 &gt; C18:0 &gt; C20:4 &gt; C20:3. This chain is Phosphatidylinositol transfer protein alpha isoform (Pitpna), found in Rattus norvegicus (Rat).